A 226-amino-acid polypeptide reads, in one-letter code: ATP synthase F(0) complex subunit a (226 aa).

The next 6 helical transmembrane spans lie at 10–30 (ITPT…PPVI), 68–88 (WSLM…LGLL), 97–117 (QLSM…ILGF), 138–158 (IPML…ALAV), 164–184 (ITAG…LTSI), and 189–209 (AMIT…VALI).

The protein belongs to the ATPase A chain family. As to quaternary structure, component of the ATP synthase complex composed at least of ATP5F1A/subunit alpha, ATP5F1B/subunit beta, ATP5MC1/subunit c (homooctomer), MT-ATP6/subunit a, MT-ATP8/subunit 8, ATP5ME/subunit e, ATP5MF/subunit f, ATP5MG/subunit g, ATP5MK/subunit k, ATP5MJ/subunit j, ATP5F1C/subunit gamma, ATP5F1D/subunit delta, ATP5F1E/subunit epsilon, ATP5PF/subunit F6, ATP5PB/subunit b, ATP5PD/subunit d, ATP5PO/subunit OSCP. ATP synthase complex consists of a soluble F(1) head domain (subunits alpha(3) and beta(3)) - the catalytic core - and a membrane F(0) domain - the membrane proton channel (subunits c, a, 8, e, f, g, k and j). These two domains are linked by a central stalk (subunits gamma, delta, and epsilon) rotating inside the F1 region and a stationary peripheral stalk (subunits F6, b, d, and OSCP). Interacts with DNAJC30; interaction is direct.

It is found in the mitochondrion inner membrane. It catalyses the reaction H(+)(in) = H(+)(out). In terms of biological role, subunit a, of the mitochondrial membrane ATP synthase complex (F(1)F(0) ATP synthase or Complex V) that produces ATP from ADP in the presence of a proton gradient across the membrane which is generated by electron transport complexes of the respiratory chain. ATP synthase complex consist of a soluble F(1) head domain - the catalytic core - and a membrane F(1) domain - the membrane proton channel. These two domains are linked by a central stalk rotating inside the F(1) region and a stationary peripheral stalk. During catalysis, ATP synthesis in the catalytic domain of F(1) is coupled via a rotary mechanism of the central stalk subunits to proton translocation. With the subunit c (ATP5MC1), forms the proton-conducting channel in the F(0) domain, that contains two crucial half-channels (inlet and outlet) that facilitate proton movement from the mitochondrial intermembrane space (IMS) into the matrix. Protons are taken up via the inlet half-channel and released through the outlet half-channel, following a Grotthuss mechanism. In Cricetulus griseus (Chinese hamster), this protein is ATP synthase F(0) complex subunit a.